Consider the following 88-residue polypeptide: MIKNAFISFQEKKEESKGSVEFQVFSFTNKIRRLTSHLELHRKDYLSQRGLRKILGKRQRLLAYLSKKNRVRYKELIKQLNIRELKTR.

It belongs to the universal ribosomal protein uS15 family. In terms of assembly, part of the 30S ribosomal subunit.

Its subcellular location is the plastid. It is found in the chloroplast. The protein is Small ribosomal subunit protein uS15c (rps15) of Lobularia maritima (Sweet alyssum).